A 158-amino-acid polypeptide reads, in one-letter code: MRSIAGLHKLKMEIFNVEELINMKPFKNMNKITINQNDNCILANRCFVKIDTPRYIPSTSISSSNIIRIRNHDFTLSELLYSPFHFQQPQFQYLLPGFVLTCIDKVSKQQKECKYCISNRGDDDSLSINLFIPTINKSIYIIIGLRMKNFWKPKFEIE.

Belongs to the orthopoxvirus OPG058 family.

The chain is Protein OPG060 (OPG060) from Homo sapiens (Human).